The chain runs to 322 residues: Cysteine protease YopT (322 aa).

Active-site residues include cysteine 139, histidine 258, and aspartate 274.

The protein belongs to the peptidase C58 family. In terms of assembly, interacts with human ARHA.

The protein resides in the secreted. Cysteine protease, which is translocated into infected cells and plays a central role in pathogenesis by cleaving the C-terminus end of the human small GTPase RhoA/ARHA, a regulator of cytoskeleton. Once cleaved, ARHA loses its lipid modification, and is released from the cell membrane, leading to the subsequent disruption of actin cytoskeleton of the host cell. This Yersinia pseudotuberculosis serotype I (strain IP32953) protein is Cysteine protease YopT (yopT).